The primary structure comprises 611 residues: Elongation factor 4 (611 aa).

The tr-type G domain occupies 11–193 (KHIRNFSIVA…KIVKDVPAPT (183 aa)). Residues 23–28 (DHGKST) and 140–143 (NKID) contribute to the GTP site.

The protein belongs to the TRAFAC class translation factor GTPase superfamily. Classic translation factor GTPase family. LepA subfamily.

Its subcellular location is the cell membrane. The enzyme catalyses GTP + H2O = GDP + phosphate + H(+). Functionally, required for accurate and efficient protein synthesis under certain stress conditions. May act as a fidelity factor of the translation reaction, by catalyzing a one-codon backward translocation of tRNAs on improperly translocated ribosomes. Back-translocation proceeds from a post-translocation (POST) complex to a pre-translocation (PRE) complex, thus giving elongation factor G a second chance to translocate the tRNAs correctly. Binds to ribosomes in a GTP-dependent manner. The polypeptide is Elongation factor 4 (Limosilactobacillus reuteri (strain DSM 20016) (Lactobacillus reuteri)).